Reading from the N-terminus, the 1070-residue chain is DNA-directed RNA polymerase subunit beta (1070 aa).

Belongs to the RNA polymerase beta chain family. As to quaternary structure, in plastids the minimal PEP RNA polymerase catalytic core is composed of four subunits: alpha, beta, beta', and beta''. When a (nuclear-encoded) sigma factor is associated with the core the holoenzyme is formed, which can initiate transcription.

Its subcellular location is the plastid. It is found in the chloroplast. It catalyses the reaction RNA(n) + a ribonucleoside 5'-triphosphate = RNA(n+1) + diphosphate. In terms of biological role, DNA-dependent RNA polymerase catalyzes the transcription of DNA into RNA using the four ribonucleoside triphosphates as substrates. The sequence is that of DNA-directed RNA polymerase subunit beta from Dioscorea elephantipes (Elephant's foot yam).